Reading from the N-terminus, the 505-residue chain is Histidine ammonia-lyase (505 aa).

The segment at residues 141–143 is a cross-link (5-imidazolinone (Ala-Gly)); the sequence is ASG. 2,3-didehydroalanine (Ser) is present on S142.

It belongs to the PAL/histidase family. Post-translationally, contains an active site 4-methylidene-imidazol-5-one (MIO), which is formed autocatalytically by cyclization and dehydration of residues Ala-Ser-Gly.

The protein localises to the cytoplasm. The enzyme catalyses L-histidine = trans-urocanate + NH4(+). It functions in the pathway amino-acid degradation; L-histidine degradation into L-glutamate; N-formimidoyl-L-glutamate from L-histidine: step 1/3. The protein is Histidine ammonia-lyase of Bacillus cytotoxicus (strain DSM 22905 / CIP 110041 / 391-98 / NVH 391-98).